We begin with the raw amino-acid sequence, 237 residues long: Lycopene beta-cyclase (237 aa).

7 helical membrane passes run 3-23 (TSYL…LGVV), 38-58 (VGIL…YLIA), 80-100 (EYLF…ALPL), 113-133 (AVLG…LLTV), 137-157 (FYIG…WAVG), 170-192 (AAVL…DGIW), and 213-233 (AFFF…AWVL).

It belongs to the lycopene beta-cyclase family.

The protein resides in the cell membrane. It carries out the reaction a carotenoid psi-end group = a carotenoid beta-end derivative. The enzyme catalyses all-trans-lycopene = gamma-carotene. It catalyses the reaction gamma-carotene = all-trans-beta-carotene. It functions in the pathway carotenoid biosynthesis; beta-carotene biosynthesis. Functionally, catalyzes the cyclization of both ends of lycopene to form beta-carotene, a retinal precursor. Is required for bacteriorhodopsin biogenesis, a light-driven proton pump with a covalently bound retinal cofactor. The polypeptide is Lycopene beta-cyclase (Halobacterium salinarum (strain ATCC 29341 / DSM 671 / R1)).